The primary structure comprises 589 residues: Monocopper oxidase-like protein SKS1 (589 aa).

A signal peptide spans 1–24 (MAATCSLLASFLLCFALLSAVSFA). Residues N62, N111, N204, N243, N260, N296, N345, N365, N433, and N447 are each glycosylated (N-linked (GlcNAc...) asparagine). Residues 322–356 (LPVPKTDVSSPWSAMSQPKTIRQNTSASGARPNPQ) are disordered. Residues 328–349 (DVSSPWSAMSQPKTIRQNTSAS) show a composition bias toward polar residues. Position 455 (H455) interacts with Cu cation. S563 carries GPI-anchor amidated serine lipidation. A propeptide spans 564–589 (AATSILNGHLKLMLLMVLLASVFRFC) (removed in mature form).

Belongs to the multicopper oxidase family. The cofactor is Cu cation.

It localises to the cell membrane. The protein is Monocopper oxidase-like protein SKS1 (SKS1) of Arabidopsis thaliana (Mouse-ear cress).